The sequence spans 224 residues: Vesicle transport through interaction with t-SNAREs homolog 1A (224 aa).

At 1 to 199 (MSADFEGYEQ…GMLRRIIQNR (199 aa)) the chain is on the cytoplasmic side. 2 coiled-coil regions span residues 31–92 (PDEK…KRSR) and 106–185 (DAGN…GKSS). Residues 200–220 (ILLVILGIIVVITILTAITFF) form a helical; Anchor for type IV membrane protein membrane-spanning segment. Topologically, residues 221-224 (VRGH) are vesicular.

It belongs to the VTI1 family. In terms of assembly, interacts with distinct SNARE complexes that contain either STX5 or STX6. Interacts with NAPA and, to a lesser extent, with NAPG. Identified in a complex containing STX6, STX12, VAMP4 and VTI1A. As to expression, specifically expressed in the neuronal tissues cerebellum, cortex and hippocampus. Isoform 1/VTI1A is expressed in the same neuronal tissues but also in lung, liver, kidney and spleen.

It is found in the membrane. Its subcellular location is the cytoplasmic vesicle. It localises to the secretory vesicle. The protein resides in the synaptic vesicle membrane. The protein localises to the clathrin-coated vesicle membrane. It is found in the golgi apparatus membrane. In terms of biological role, V-SNARE that mediates vesicle transport pathways through interactions with t-SNAREs on the target membrane. These interactions are proposed to mediate aspects of the specificity of vesicle trafficking and to promote fusion of the lipid bilayers. Involved in vesicular transport from the late endosomes to the trans-Golgi network. Along with VAMP7, involved in an non-conventional RAB1-dependent traffic route to the cell surface used by KCNIP1 and KCND2. May be concerned with increased secretion of cytokines associated with cellular senescence. This chain is Vesicle transport through interaction with t-SNAREs homolog 1A (Vti1a), found in Rattus norvegicus (Rat).